Here is a 461-residue protein sequence, read N- to C-terminus: MLELRHRGGCPGPGGAGAPPPREGEAAGGDHETESTSDKETDIDDRYGDLDARGDSDVPEVPPSSDRTPEILKKALSGLSSRWKNWWIRGILTLTMISLFFLIIYMGSFMLMLLVLGIQVKCFHEIITIGYRVYHSYDLPWFRTLSWYFLLCVNYFFYGETVADYFATFVQREEQLQFLIRYHRFISFALYLAGFCMFVLSLVKKHYRLQFYMFAWTHVTLLITVTQSHLVIQNLFEGMIWFLVPISSVICNDITAYLFGFFFGRTPLIKLSPKKTWEGFIGGFFSTVIFGFIAAYVLSKYQYFVCPVEYRSDVNSFVTECEPSELFQLQNYSLPPFLQAVLSRETVSLYPFQIHSIALSTFASLIGPFGGFFASGFKRAFKIKDFANTIPGHGGIMDRFDCQYLMATFVHVYITSFIRGPNPSKVLQQLLVLQPEQQLNIYRTLKIHLTEKGILQPTLKV.

Residues 1–68 are disordered; that stretch reads MLELRHRGGC…PEVPPSSDRT (68 aa). At arginine 7 the chain carries Omega-N-methylarginine. The span at 22 to 56 shows a compositional bias: basic and acidic residues; sequence REGEAAGGDHETESTSDKETDIDDRYGDLDARGDS. Serine 35 and serine 37 each carry phosphoserine. A run of 6 helical transmembrane segments spans residues 96–116, 149–169, 183–203, 230–250, 279–299, and 357–377; these read MISL…LLVL, FLLC…FATF, HRFI…LSLV, LVIQ…SSVI, GFIG…YVLS, and IALS…ASGF.

It belongs to the CDS family. As to quaternary structure, homodimer. Interacts with FOS; this interaction may enhance catalytic activity. It depends on Mg(2+) as a cofactor. In terms of tissue distribution, expressed in adult brain, eye, smooth muscle and testis. Highly expressed in the inner segment of the photoreceptor layer of adult retina.

The protein localises to the endoplasmic reticulum membrane. The catalysed reaction is a 1,2-diacyl-sn-glycero-3-phosphate + CTP + H(+) = a CDP-1,2-diacyl-sn-glycerol + diphosphate. It carries out the reaction 1-octadecanoyl-2-(5Z,8Z,11Z,14Z-eicosatetraenoyl)-sn-glycero-3-phosphate + CTP + H(+) = 1-octadecanoyl-2-(5Z,8Z,11Z,14Z-eicosatetraenoyl)-sn-glycero-3-cytidine-5'-diphosphate + diphosphate. It catalyses the reaction 1-octadecanoyl-2-(9Z,12Z-octadecadienoyl)-sn-glycero-3-phosphate + CTP + H(+) = 1-octadecanoyl-2-(9Z,12Z-octadecadienoyl)-sn-glycero-3-cytidine-5'-diphosphate + diphosphate. The enzyme catalyses 1-hexadecanoyl-2-(5Z,8Z,11Z,14Z-eicosatetraenoyl)-sn-glycero-3-phosphate + CTP + H(+) = 1-hexadecanoyl-2-(5Z,8Z,11Z,14Z-eicosatetraenoyl)-sn-glycero-3-cytidine-5'-diphosphate + diphosphate. The catalysed reaction is 1,2-di-(5Z,8Z,11Z,14Z)-eicosatetraenoyl-sn-glycero-3-phosphate + CTP + H(+) = 1,2-di-(5Z,8Z,11Z,14Z-eicosatetraenoyl)-sn-glycero-3-cytidine-5'-diphosphate + diphosphate. It carries out the reaction 1-octadecanoyl-2-(9Z-octadecenoyl)-sn-glycero-3-phosphate + CTP + H(+) = 1-octadecanoyl-2-(9Z-octadecenoyl)-sn-glycero-3-cytidine-5'-diphosphate + diphosphate. It catalyses the reaction 1-octadecanoyl-2-(4Z,7Z,10Z,13Z,16Z,19Z-docosahexaenoyl)-sn-glycero-3-phosphate + CTP + H(+) = 1-octadecanoyl-2-(4Z,7Z,10Z,13Z,16Z,19Z-docosahexaenoyl)-sn-glycero-3-cytidine-5'-diphosphate + diphosphate. The enzyme catalyses 1,2-di-(9Z,12Z-octadecadienoyl)-sn-glycero-3-phosphate + CTP + H(+) = 1,2-di-(9Z,12Z-octadecadienoyl)-sn-glycero-3-cytidine-5'-diphosphate + diphosphate. The catalysed reaction is 1,2-di-(9Z-octadecenoyl)-sn-glycero-3-phosphate + CTP + H(+) = 1,2-di-(9Z-octadecenoyl)-sn-glycero-3-cytidine-5'-diphosphate + diphosphate. The protein operates within phospholipid metabolism; CDP-diacylglycerol biosynthesis; CDP-diacylglycerol from sn-glycerol 3-phosphate: step 3/3. In terms of biological role, catalyzes the conversion of phosphatidic acid (PA) to CDP-diacylglycerol (CDP-DAG), an essential intermediate in the synthesis of phosphatidylglycerol, cardiolipin and phosphatidylinositol. Exhibits almost no acyl chain preference for PA, showing no discrimination for the sn-1/sn-2 acyl chain composition of PAs. Plays an important role in regulating the growth of lipid droplets which are storage organelles at the center of lipid and energy homeostasis. Positively regulates the differentiation and development of adipocytes. This is Phosphatidate cytidylyltransferase 1 from Mus musculus (Mouse).